A 458-amino-acid polypeptide reads, in one-letter code: UDP-N-acetylmuramoylalanine--D-glutamate ligase (458 aa).

124 to 130 (GSDGKTT) contacts ATP.

It belongs to the MurCDEF family.

The protein resides in the cytoplasm. It carries out the reaction UDP-N-acetyl-alpha-D-muramoyl-L-alanine + D-glutamate + ATP = UDP-N-acetyl-alpha-D-muramoyl-L-alanyl-D-glutamate + ADP + phosphate + H(+). The protein operates within cell wall biogenesis; peptidoglycan biosynthesis. Its function is as follows. Cell wall formation. Catalyzes the addition of glutamate to the nucleotide precursor UDP-N-acetylmuramoyl-L-alanine (UMA). The polypeptide is UDP-N-acetylmuramoylalanine--D-glutamate ligase (Clostridium botulinum (strain Alaska E43 / Type E3)).